A 122-amino-acid polypeptide reads, in one-letter code: Large ribosomal subunit protein uL14 (122 aa).

Belongs to the universal ribosomal protein uL14 family. As to quaternary structure, part of the 50S ribosomal subunit. Forms a cluster with proteins L3 and L19. In the 70S ribosome, L14 and L19 interact and together make contacts with the 16S rRNA in bridges B5 and B8.

Its function is as follows. Binds to 23S rRNA. Forms part of two intersubunit bridges in the 70S ribosome. In Chlorobium limicola (strain DSM 245 / NBRC 103803 / 6330), this protein is Large ribosomal subunit protein uL14.